A 102-amino-acid polypeptide reads, in one-letter code: Small ribosomal subunit protein uS10 (102 aa).

Belongs to the universal ribosomal protein uS10 family. As to quaternary structure, part of the 30S ribosomal subunit.

Involved in the binding of tRNA to the ribosomes. The sequence is that of Small ribosomal subunit protein uS10 from Bifidobacterium longum (strain DJO10A).